Here is a 264-residue protein sequence, read N- to C-terminus: uncharacterized protein (264 aa).

The chain crosses the membrane as a helical span at residues 182–198 (TVTGVSNALGFIIAALL).

The protein to E.coli YjiC.

It is found in the membrane. This is an uncharacterized protein from Escherichia coli (strain K12).